Consider the following 427-residue polypeptide: 3-phosphoshikimate 1-carboxyvinyltransferase (427 aa).

3-phosphoshikimate-binding residues include Lys-22, Ser-23, and Arg-27. Lys-22 is a phosphoenolpyruvate binding site. Phosphoenolpyruvate-binding residues include Gly-96 and Arg-124. Residues Ser-170, Ser-171, Gln-172, Ser-199, Asp-313, Asn-336, and Lys-340 each coordinate 3-phosphoshikimate. Position 172 (Gln-172) interacts with phosphoenolpyruvate. Asp-313 functions as the Proton acceptor in the catalytic mechanism. Phosphoenolpyruvate-binding residues include Arg-344, Arg-386, and Lys-411.

It belongs to the EPSP synthase family. As to quaternary structure, monomer.

It localises to the cytoplasm. The catalysed reaction is 3-phosphoshikimate + phosphoenolpyruvate = 5-O-(1-carboxyvinyl)-3-phosphoshikimate + phosphate. Its pathway is metabolic intermediate biosynthesis; chorismate biosynthesis; chorismate from D-erythrose 4-phosphate and phosphoenolpyruvate: step 6/7. Functionally, catalyzes the transfer of the enolpyruvyl moiety of phosphoenolpyruvate (PEP) to the 5-hydroxyl of shikimate-3-phosphate (S3P) to produce enolpyruvyl shikimate-3-phosphate and inorganic phosphate. In Aeromonas salmonicida, this protein is 3-phosphoshikimate 1-carboxyvinyltransferase.